A 376-amino-acid polypeptide reads, in one-letter code: UDP-N-acetylglucosamine 2-epimerase (376 aa).

Residues Arg10, Lys15, Asp95, Glu117, His213, Gln271, Phe276, 290 to 292 (SGG), Glu296, and Arg313 contribute to the substrate site.

It belongs to the UDP-N-acetylglucosamine 2-epimerase family. In terms of assembly, homodimer.

The protein localises to the cytoplasm. It catalyses the reaction UDP-N-acetyl-alpha-D-glucosamine = UDP-N-acetyl-alpha-D-mannosamine. It participates in bacterial outer membrane biogenesis; enterobacterial common antigen biosynthesis. Functionally, catalyzes the reversible epimerization at C-2 of UDP-N-acetylglucosamine (UDP-GlcNAc) and thereby provides bacteria with UDP-N-acetylmannosamine (UDP-ManNAc), the activated donor of ManNAc residues. This chain is UDP-N-acetylglucosamine 2-epimerase, found in Salmonella typhimurium (strain LT2 / SGSC1412 / ATCC 700720).